An 83-amino-acid polypeptide reads, in one-letter code: Kunitz-type serine protease inhibitor mulgin-2 (83 aa).

A signal peptide spans methionine 1–serine 24. The BPTI/Kunitz inhibitor domain occupies cysteine 31–cysteine 81. 3 disulfide bridges follow: cysteine 31–cysteine 81, cysteine 40–cysteine 64, and cysteine 56–cysteine 77.

The protein belongs to the venom Kunitz-type family. Expressed by the venom gland.

Its subcellular location is the secreted. Serine protease inhibitor. The chain is Kunitz-type serine protease inhibitor mulgin-2 from Pseudechis australis (Mulga snake).